Reading from the N-terminus, the 401-residue chain is MDTGVKKVVLAYSGGLDTSVIVQWLIETYGCEVIAFAADVGQKEELEGLREKAIKTGASKIYIEDLREEFARDFVFPALRANAIYEGTYLLGTSLARPLIAKRQVEIARAEGADAVCHGATGKGNDQVRFELTYMALEPNIRIISAWKDPNWHFKSREDMFDYAEKHNIPLPLTREKPYSSDRNLLHISHEGAILEDPWAEPPEDIFTISLSPEAAPDKPTYVEIDFEQGNPVALDGARLSPAALMEKMNDIAGANGIGRVDMVENRFVGMKSRGVYETPGGTVLWAAHRALESLTMDREVMLMRDSLIPKYAQLAYNGFWYAPEMEALQALIDETQKKATGTVRMKLYKGNSIVVGRKSPYSLYSEDFATFEKDQVYNQMDATGFIRLNALRLRIAAMKK.

ATP-binding positions include 11 to 19 (AYSGGLDTS) and Ala38. Positions 89 and 94 each coordinate L-citrulline. Gly119 lines the ATP pocket. Thr121, Asn125, and Asp126 together coordinate L-aspartate. Asn125 provides a ligand contact to L-citrulline. 5 residues coordinate L-citrulline: Arg129, Ser180, Ser189, Glu265, and Tyr277.

This sequence belongs to the argininosuccinate synthase family. Type 1 subfamily. Homotetramer.

The protein resides in the cytoplasm. The enzyme catalyses L-citrulline + L-aspartate + ATP = 2-(N(omega)-L-arginino)succinate + AMP + diphosphate + H(+). It functions in the pathway amino-acid biosynthesis; L-arginine biosynthesis; L-arginine from L-ornithine and carbamoyl phosphate: step 2/3. The polypeptide is Argininosuccinate synthase (Syntrophus aciditrophicus (strain SB)).